A 179-amino-acid chain; its full sequence is Ribosome maturation factor RimM (179 aa).

Residues 100–176 (KEEFHLLELI…FLIINPPNGL (77 aa)) form the PRC barrel domain.

Belongs to the RimM family. In terms of assembly, binds ribosomal protein uS19.

It is found in the cytoplasm. In terms of biological role, an accessory protein needed during the final step in the assembly of 30S ribosomal subunit, possibly for assembly of the head region. Essential for efficient processing of 16S rRNA. May be needed both before and after RbfA during the maturation of 16S rRNA. It has affinity for free ribosomal 30S subunits but not for 70S ribosomes. The chain is Ribosome maturation factor RimM from Prochlorococcus marinus (strain AS9601).